We begin with the raw amino-acid sequence, 409 residues long: Autotransproter heptosyltransferase BAHTCr (409 aa).

The ADP-D-glycero-beta-D-manno-heptose site is built by T107, L108, and G109. The active-site Proton acceptor is D110. ADP-D-glycero-beta-D-manno-heptose-binding residues include Q224, T226, K230, R257, G302, and E326. Fe(3+) is bound by residues C339, C342, C358, and C370.

The protein belongs to the glycosyltransferase 9 family. In terms of assembly, homododecamer composed of 6 homodimers forming a ring. Requires Fe(3+) as cofactor.

It localises to the cytoplasm. The catalysed reaction is ADP-D-glycero-beta-D-manno-heptose + L-seryl-[protein] = O-(D-glycero-alpha-D-manno-heptosyl)-L-seryl-[protein] + ADP + H(+). It catalyses the reaction ADP-L-glycero-beta-D-manno-heptose + L-seryl-[protein] = O-(L-glycero-alpha-D-manno-heptosyl)-L-seryl-[protein] + ADP + H(+). Glycosylates autotransporter CARC. By glycosylating CARC, involved in the colonization of the mouse host gastrointestinal tract. In Citrobacter rodentium (strain ICC168) (Citrobacter freundii biotype 4280), this protein is Autotransproter heptosyltransferase BAHTCr.